The primary structure comprises 360 residues: DNA replication and repair protein RecF (360 aa).

30 to 37 (GRNAQGKT) is an ATP binding site.

This sequence belongs to the RecF family.

The protein localises to the cytoplasm. Functionally, the RecF protein is involved in DNA metabolism; it is required for DNA replication and normal SOS inducibility. RecF binds preferentially to single-stranded, linear DNA. It also seems to bind ATP. This chain is DNA replication and repair protein RecF, found in Desulforudis audaxviator (strain MP104C).